We begin with the raw amino-acid sequence, 2137 residues long: Autophagy-related protein 2 (2137 aa).

Disordered stretches follow at residues Phe108 to Thr137, Pro296 to Asp325, Glu339 to Glu384, Leu410 to Glu531, Ala612 to Thr640, and Asp666 to Pro749. Composition is skewed to polar residues over residues Ser118–Asp128 and Thr301–Ile315. The segment covering Asp413 to Pro423 has biased composition (acidic residues). Residues Pro429–Pro440 are compositionally biased toward polar residues. Positions Thr488–Arg505 are enriched in low complexity. Residues Arg510–Val526 show a composition bias toward polar residues. Positions Asp666–Arg675 are enriched in basic and acidic residues. Positions Ser696 to Thr706 are enriched in low complexity.

The protein belongs to the ATG2 family.

Its subcellular location is the preautophagosomal structure membrane. The protein localises to the endoplasmic reticulum membrane. It carries out the reaction a 1,2-diacyl-sn-glycero-3-phosphocholine(in) = a 1,2-diacyl-sn-glycero-3-phosphocholine(out). It catalyses the reaction a 1,2-diacyl-sn-glycero-3-phospho-L-serine(in) = a 1,2-diacyl-sn-glycero-3-phospho-L-serine(out). The enzyme catalyses a 1,2-diacyl-sn-glycero-3-phosphoethanolamine(in) = a 1,2-diacyl-sn-glycero-3-phosphoethanolamine(out). Its function is as follows. Lipid transfer protein required for autophagosome completion and peroxisome degradation. Tethers the edge of the isolation membrane (IM) to the endoplasmic reticulum (ER) and mediates direct lipid transfer from ER to IM for IM expansion. Atg2 binds to the ER exit site (ERES), which is the membrane source for autophagosome formation, using basic residues in its N-terminal region (NR) and to the expanding edge of the IM through its C-terminal region. The latter binding is assisted by an atg18-PtdIns3P interaction. Atg2 then extracts phospholipids from the membrane source using its NR and transfers them to atg9 to the IM through its predicted beta-sheet-rich structure for membrane expansion. This chain is Autophagy-related protein 2 (atg2), found in Neosartorya fischeri (strain ATCC 1020 / DSM 3700 / CBS 544.65 / FGSC A1164 / JCM 1740 / NRRL 181 / WB 181) (Aspergillus fischerianus).